Consider the following 453-residue polypeptide: Histidine--tRNA ligase (453 aa).

It belongs to the class-II aminoacyl-tRNA synthetase family. As to quaternary structure, homodimer.

It localises to the cytoplasm. It catalyses the reaction tRNA(His) + L-histidine + ATP = L-histidyl-tRNA(His) + AMP + diphosphate + H(+). The sequence is that of Histidine--tRNA ligase from Cytophaga hutchinsonii (strain ATCC 33406 / DSM 1761 / CIP 103989 / NBRC 15051 / NCIMB 9469 / D465).